The chain runs to 113 residues: Hydrogenase maturation factor HypA (113 aa).

Position 2 (H2) interacts with Ni(2+). Residues C73, C76, C89, and C92 each contribute to the Zn(2+) site.

Belongs to the HypA/HybF family.

Its function is as follows. Involved in the maturation of [NiFe] hydrogenases. Required for nickel insertion into the metal center of the hydrogenase. This Chlorobaculum tepidum (strain ATCC 49652 / DSM 12025 / NBRC 103806 / TLS) (Chlorobium tepidum) protein is Hydrogenase maturation factor HypA.